We begin with the raw amino-acid sequence, 395 residues long: General transcription factor IIH subunit 2 (395 aa).

The 177-residue stretch at 60 to 236 folds into the VWFA domain; the sequence is HLYVVVDGSR…HYKELLTHHV (177 aa). A Phosphotyrosine modification is found at tyrosine 95. A C4-type zinc finger spans residues 291 to 308; the sequence is CPQCRAKYCELPVECKIC.

The protein belongs to the GTF2H2 family. In terms of assembly, component of the TFIID-containing RNA polymerase II pre-initiation complex that is composed of TBP and at least GTF2A1, GTF2A2, GTF2E1, GTF2E2, GTF2F1, GTF2H2, GTF2H3, GTF2H4, GTF2H5, GTF2B, TCEA1, ERCC2 and ERCC3. Component of the 7-subunit TFIIH core complex composed of XPB/ERCC3, XPD/ERCC2, GTF2H1, GTF2H2, GTF2H3, GTF2H4 and GTF2H5, which is active in NER. The core complex associates with the 3-subunit CDK-activating kinase (CAK) module composed of CCNH/cyclin H, CDK7 and MNAT1 to form the 10-subunit holoenzyme (holo-TFIIH) active in transcription. Interacts with XPB, XPD, GTF2H1 and GTF2H3. (Microbial infection) Interacts with varicella-zoster virus IE63 protein. In terms of tissue distribution, widely expressed, with higher expression in skeletal muscle.

The protein resides in the nucleus. Its function is as follows. Component of the general transcription and DNA repair factor IIH (TFIIH) core complex, which is involved in general and transcription-coupled nucleotide excision repair (NER) of damaged DNA and, when complexed to CAK, in RNA transcription by RNA polymerase II. In NER, TFIIH acts by opening DNA around the lesion to allow the excision of the damaged oligonucleotide and its replacement by a new DNA fragment. In transcription, TFIIH has an essential role in transcription initiation. When the pre-initiation complex (PIC) has been established, TFIIH is required for promoter opening and promoter escape. Phosphorylation of the C-terminal tail (CTD) of the largest subunit of RNA polymerase II by the kinase module CAK controls the initiation of transcription. The N-terminus of GTF2H2 interacts with and regulates XPD whereas an intact C-terminus is required for a successful escape of RNAP II form the promoter. This Homo sapiens (Human) protein is General transcription factor IIH subunit 2 (GTF2H2).